The primary structure comprises 398 residues: Sphingosine 1-phosphate receptor 5 (398 aa).

Residues 1–40 (MESGLLRPAPVSEVIVLHYNYTGKLRGARYQPGAGLRADA) are Extracellular-facing. Asparagine 20 is a glycosylation site (N-linked (GlcNAc...) asparagine). Residues 41–61 (VVCLAVCAFIVLENLAVLLVL) traverse the membrane as a helical segment. Topologically, residues 62 to 70 (GRHPRFHAP) are cytoplasmic. A helical membrane pass occupies residues 71–91 (MFLLLGSLTLSDLLAGAAYAA). The Extracellular portion of the chain corresponds to 92 to 111 (NILLSGPLTLKLSPALWFAR). The chain crosses the membrane as a helical span at residues 112 to 132 (EGGVFVALTASVLSLLAIALE). The Cytoplasmic portion of the chain corresponds to 133 to 151 (RSLTMARRGPAPVSSRGRT). Residues 152 to 172 (LAMAAAAWGVSLLLGLLPALG) form a helical membrane-spanning segment. Residues 173–192 (WNCLGRLDACSTVLPLYAKA) are Extracellular-facing. The helical transmembrane segment at 193–213 (YVLFCVLAFVGILAAICALYA) threads the bilayer. Residues 214 to 252 (RIYCQVRANARRLPARPGTAGTTSTRARRKPRSLALLRT) are Cytoplasmic-facing. The chain crosses the membrane as a helical span at residues 253 to 273 (LSVVLLAFVACWGPLFLLLLL). The Extracellular portion of the chain corresponds to 274 to 287 (DVACPARTCPVLLQ). Residues 288-308 (ADPFLGLAMANSLLNPIIYTL) traverse the membrane as a helical segment. Residues 309–398 (TNRDLRHALL…RTLVSEPAAD (90 aa)) lie on the Cytoplasmic side of the membrane. A lipid anchor (S-palmitoyl cysteine) is attached at cysteine 323. The segment at 329-398 (GRDPSGSQQS…RTLVSEPAAD (70 aa)) is disordered. The span at 333–347 (SGSQQSASAAEASGG) shows a compositional bias: low complexity. Serine 381 is subject to Phosphoserine.

Belongs to the G-protein coupled receptor 1 family. As to expression, widely expressed in the brain, most prominently in the corpus callosum, which is predominantly white matter. Detected in spleen, peripheral blood leukocytes, placenta, lung, aorta and fetal spleen. Low-level signal detected in many tissue extracts. Overexpressed in leukemic large granular lymphocytes. Isoform 1 is predominantly expressed in peripheral tissues. Isoform 2 is expressed in brain, spleen and peripheral blood leukocytes.

The protein resides in the cell membrane. Its function is as follows. Receptor for the lysosphingolipid sphingosine 1-phosphate (S1P). S1P is a bioactive lysophospholipid that elicits diverse physiological effect on most types of cells and tissues. Is coupled to both the G(i/0)alpha and G(12) subclass of heteromeric G-proteins. May play a regulatory role in the transformation of radial glial cells into astrocytes and may affect proliferative activity of these cells. This is Sphingosine 1-phosphate receptor 5 (S1PR5) from Homo sapiens (Human).